The sequence spans 477 residues: MMEKNTSEGPACSPEETASESAKVPTAEPPGEVAVSESTREEQVPKPQAPAPQAPTASTATKPAPPSEDVPSAPLLLTLDDVSSSSVTVSWEPPERLGRLGLQGYVLELCREGASEWVPVSARPMMVTQQTVRNLALGDKFLLRVSAVSSAGAGPPAMLDQPIHIRENIEAPKIRVPRHLRQTYIRQVGETVNLQIPFQGKPKPQATWTHNGHALDSQRVSMRTGDQDSILFIRSAQRSDSGRYELTVRVEDLEAKAVIDILVIEKPGPPSSIRLLDVWGCNAALQWTPPQDTGNTELLGYMVQKADKKTGQWFTVLERYHPTTCTISDLIIGNSYSFRVFSENLCGLSTSATVTKELAHIQKADIAAKPKGFIERDFSEAPSFTQPLADHTSTPGYSTQLFCSVRASPKPKIIWMKNKMEIQGNPKYRALSEQGVCTLEIRKPSPFDSGVYTCKAINVLGEASVDCRLEVKASAAH.

Residues 1-73 (MMEKNTSEGP…APPSEDVPSA (73 aa)) are disordered. Phosphothreonine is present on residues threonine 6 and threonine 26. The 96-residue stretch at 73-168 (APLLLTLDDV…LDQPIHIREN (96 aa)) folds into the Fibronectin type-III 1 domain. The Ig-like C2-type 1 domain occupies 172 to 260 (PKIRVPRHLR…EDLEAKAVID (89 aa)). A Fibronectin type-III 2 domain is found at 269–364 (PPSSIRLLDV…TKELAHIQKA (96 aa)). The region spanning 382-466 (PSFTQPLADH…INVLGEASVD (85 aa)) is the Ig-like C2-type 2 domain.

It belongs to the immunoglobulin superfamily. MyBP family. As to expression, mainly expressed in the skeletal muscle. Slightly expressed in the left atrium and arteria mammaria interna.

In terms of biological role, binds to myosin; probably involved in interaction with thick myofilaments in the A-band. The protein is Myosin-binding protein H (MYBPH) of Homo sapiens (Human).